We begin with the raw amino-acid sequence, 255 residues long: Triosephosphate isomerase (255 aa).

9–11 (NWK) provides a ligand contact to substrate. Catalysis depends on H95, which acts as the Electrophile. Catalysis depends on E167, which acts as the Proton acceptor. Substrate-binding positions include G173, S212, and 233-234 (GG).

Belongs to the triosephosphate isomerase family. Homodimer.

The protein resides in the cytoplasm. The catalysed reaction is D-glyceraldehyde 3-phosphate = dihydroxyacetone phosphate. It functions in the pathway carbohydrate biosynthesis; gluconeogenesis. It participates in carbohydrate degradation; glycolysis; D-glyceraldehyde 3-phosphate from glycerone phosphate: step 1/1. Its function is as follows. Involved in the gluconeogenesis. Catalyzes stereospecifically the conversion of dihydroxyacetone phosphate (DHAP) to D-glyceraldehyde-3-phosphate (G3P). The protein is Triosephosphate isomerase of Erwinia tasmaniensis (strain DSM 17950 / CFBP 7177 / CIP 109463 / NCPPB 4357 / Et1/99).